A 77-amino-acid chain; its full sequence is Translation initiation factor IF-1, chloroplastic (77 aa).

Residues 1–72 (MKKQNLIEME…TKGRITYRLR (72 aa)) enclose the S1-like domain.

It belongs to the IF-1 family. Component of the 30S ribosomal translation pre-initiation complex which assembles on the 30S ribosome in the order IF-2 and IF-3, IF-1 and N-formylmethionyl-tRNA(fMet); mRNA recruitment can occur at any time during PIC assembly.

Its subcellular location is the plastid. The protein localises to the chloroplast. Its function is as follows. One of the essential components for the initiation of protein synthesis. Stabilizes the binding of IF-2 and IF-3 on the 30S subunit to which N-formylmethionyl-tRNA(fMet) subsequently binds. Helps modulate mRNA selection, yielding the 30S pre-initiation complex (PIC). Upon addition of the 50S ribosomal subunit IF-1, IF-2 and IF-3 are released leaving the mature 70S translation initiation complex. This Zygnema circumcarinatum (Green alga) protein is Translation initiation factor IF-1, chloroplastic.